Consider the following 176-residue polypeptide: Large ribosomal subunit protein uL6 (176 aa).

A compositionally biased stretch (basic and acidic residues) spans 151-170 (RPPEPYKGKGVRYADEQVRR). The disordered stretch occupies residues 151–176 (RPPEPYKGKGVRYADEQVRRKEAKKK).

It belongs to the universal ribosomal protein uL6 family. Part of the 50S ribosomal subunit.

In terms of biological role, this protein binds to the 23S rRNA, and is important in its secondary structure. It is located near the subunit interface in the base of the L7/L12 stalk, and near the tRNA binding site of the peptidyltransferase center. This is Large ribosomal subunit protein uL6 from Shewanella loihica (strain ATCC BAA-1088 / PV-4).